The following is a 264-amino-acid chain: Catenin delta-2 (264 aa).

ARM repeat units follow at residues 20–59 (NKIK…NLVY), 64–104 (DDNK…NLSS), 120–162 (LTNA…NVSS), and 166–211 (EARR…NLSY). The tract at residues 238-264 (GKDAESSGCWGKKKKKKKSQDQWDGVG) is disordered.

Belongs to the beta-catenin family. In terms of assembly, binds to E-cadherin at a juxtamembrane site within the cytoplasmic domain. Binds to PSEN1. Interacts with ZBTB33. Interacts with ARHGEF28. Interacts (via the extreme C-terminus) with FRMPD2 (via the PDZ 2 domain). Interacts with PDZD2. Interacts with CDK5. Interacts with CTNBB1. Interacts with GSK3A and GSK3B. Interacts with DNM2. Interacts with CCDC85B. In terms of processing, O-glycosylated. Post-translationally, phosphorylated by CDK5. Phosphorylated by GSK3B. In terms of tissue distribution, predominantly expressed in brain; accumulates in cortical neurons (at protein level).

It localises to the nucleus. The protein resides in the cell junction. Its subcellular location is the adherens junction. The protein localises to the cell projection. It is found in the dendrite. It localises to the perikaryon. Has a critical role in neuronal development, particularly in the formation and/or maintenance of dendritic spines and synapses. Involved in the regulation of canonical Wnt signaling. It probably acts on beta-catenin turnover, facilitating beta-catenin interaction with GSK3B, phosphorylation, ubiquitination and degradation. May be involved in neuronal cell adhesion and tissue morphogenesis and integrity by regulating adhesion molecules. Functions as a transcriptional activator when bound to ZBTB33. This chain is Catenin delta-2 (Ctnnd2), found in Rattus norvegicus (Rat).